A 78-amino-acid polypeptide reads, in one-letter code: Toxin BmTxKS4 (78 aa).

The first 21 residues, 1-21 (MKLKISFLILVLFSVFFAIEG), serve as a signal peptide directing secretion. A propeptide spanning residues 22–32 (IIKWFPASVNG) is cleaved from the precursor.

In terms of processing, contains 3 disulfide bonds. As to expression, expressed by the venom gland.

It is found in the secreted. Reversibly inhibits potassium channels. The polypeptide is Toxin BmTxKS4 (Olivierus martensii (Manchurian scorpion)).